The primary structure comprises 275 residues: Shikimate dehydrogenase (NADP(+)) (275 aa).

Shikimate-binding positions include 19-21 and threonine 66; that span reads SIS. Catalysis depends on lysine 70, which acts as the Proton acceptor. Residue glutamate 82 participates in NADP(+) binding. Shikimate contacts are provided by asparagine 91 and aspartate 106. NADP(+) is bound by residues 129–133, 153–158, and isoleucine 219; these read GAGGA and NRTYER. Residue tyrosine 221 participates in shikimate binding. Glycine 242 contributes to the NADP(+) binding site.

Belongs to the shikimate dehydrogenase family. In terms of assembly, homodimer.

The enzyme catalyses shikimate + NADP(+) = 3-dehydroshikimate + NADPH + H(+). It participates in metabolic intermediate biosynthesis; chorismate biosynthesis; chorismate from D-erythrose 4-phosphate and phosphoenolpyruvate: step 4/7. Functionally, involved in the biosynthesis of the chorismate, which leads to the biosynthesis of aromatic amino acids. Catalyzes the reversible NADPH linked reduction of 3-dehydroshikimate (DHSA) to yield shikimate (SA). This is Shikimate dehydrogenase (NADP(+)) from Dictyoglomus turgidum (strain DSM 6724 / Z-1310).